Consider the following 233-residue polypeptide: 5'-methylthioadenosine/S-adenosylhomocysteine nucleosidase (233 aa).

Glu-12 functions as the Proton acceptor in the catalytic mechanism. Residues Gly-78, Ile-152, and 173–174 (ME) each bind substrate. Asp-197 serves as the catalytic Proton donor.

The protein belongs to the PNP/UDP phosphorylase family. MtnN subfamily. As to quaternary structure, homodimer.

It catalyses the reaction S-adenosyl-L-homocysteine + H2O = S-(5-deoxy-D-ribos-5-yl)-L-homocysteine + adenine. It carries out the reaction S-methyl-5'-thioadenosine + H2O = 5-(methylsulfanyl)-D-ribose + adenine. The catalysed reaction is 5'-deoxyadenosine + H2O = 5-deoxy-D-ribose + adenine. It participates in amino-acid biosynthesis; L-methionine biosynthesis via salvage pathway; S-methyl-5-thio-alpha-D-ribose 1-phosphate from S-methyl-5'-thioadenosine (hydrolase route): step 1/2. In terms of biological role, catalyzes the irreversible cleavage of the glycosidic bond in both 5'-methylthioadenosine (MTA) and S-adenosylhomocysteine (SAH/AdoHcy) to adenine and the corresponding thioribose, 5'-methylthioribose and S-ribosylhomocysteine, respectively. Also cleaves 5'-deoxyadenosine, a toxic by-product of radical S-adenosylmethionine (SAM) enzymes, into 5-deoxyribose and adenine. Thus, is required for in vivo function of the radical SAM enzymes biotin synthase and lipoic acid synthase, that are inhibited by 5'-deoxyadenosine accumulation. The protein is 5'-methylthioadenosine/S-adenosylhomocysteine nucleosidase of Yersinia pestis bv. Antiqua (strain Antiqua).